The following is an 853-amino-acid chain: Aminotransferase PigE (853 aa).

Position 503-504 (503-504 (GT)) interacts with pyridoxal 5'-phosphate. Position 645 is an N6-(pyridoxal phosphate)lysine (K645). Position 680 (T680) interacts with pyridoxal 5'-phosphate.

It belongs to the class-III pyridoxal-phosphate-dependent aminotransferase family. As to quaternary structure, homodimer. Pyridoxal 5'-phosphate is required as a cofactor.

Its pathway is antibiotic biosynthesis; prodigiosin biosynthesis. Involved in the biosynthesis of 2-methyl-3-n-amyl-pyrrole (MAP), one of the terminal products involved in the biosynthesis of the red antibiotic prodigiosin (Pig). Catalyzes the transamination to the aldehyde group of 3-acetyloctanal, resulting in an aminoketone, which spontaneously cyclizes to yield the dihydro form of MAP (H2MAP). This is Aminotransferase PigE from Serratia sp. (strain FS14).